Here is an 86-residue protein sequence, read N- to C-terminus: Cytochrome c6 (86 aa).

Positions 14, 17, 18, and 58 each coordinate heme c.

The protein belongs to the cytochrome c family. PetJ subfamily. In terms of assembly, monomer. In terms of processing, binds 1 heme c group covalently per subunit.

Its subcellular location is the plastid. The protein localises to the chloroplast thylakoid lumen. Functions as an electron carrier between membrane-bound cytochrome b6-f and photosystem I in oxygenic photosynthesis. In Alaria esculenta (Irish wakame), this protein is Cytochrome c6 (petJ).